The primary structure comprises 124 residues: Small ribosomal subunit protein uS12 (124 aa).

Asp-89 bears the 3-methylthioaspartic acid mark.

It belongs to the universal ribosomal protein uS12 family. Part of the 30S ribosomal subunit. Contacts proteins S8 and S17. May interact with IF1 in the 30S initiation complex.

With S4 and S5 plays an important role in translational accuracy. Its function is as follows. Interacts with and stabilizes bases of the 16S rRNA that are involved in tRNA selection in the A site and with the mRNA backbone. Located at the interface of the 30S and 50S subunits, it traverses the body of the 30S subunit contacting proteins on the other side and probably holding the rRNA structure together. The combined cluster of proteins S8, S12 and S17 appears to hold together the shoulder and platform of the 30S subunit. The sequence is that of Small ribosomal subunit protein uS12 from Buchnera aphidicola subsp. Schizaphis graminum (strain Sg).